Here is a 334-residue protein sequence, read N- to C-terminus: Leukocyte cell-derived chemotaxin 1 (334 aa).

A helical membrane pass occupies residues 46-66; the sequence is VVLISGAVLLLFGAIGAFYFW. The 97-residue stretch at 105-201 folds into the BRICHOS domain; it reads GSGAEEAIEV…FCGDLPIFWL (97 aa). A disulfide bridge connects residues Cys-132 and Cys-193. A propeptide spanning residues 211–214 is cleaved from the precursor; it reads RERR. Positions 212–268 are disordered; the sequence is ERREVVRSSAPSTTRRPHSEPRGNAGPGRLSNRTRPSVQDDEEPFNPDNPYHQQEGE. N-linked (GlcNAc...) asparagine glycosylation occurs at Asn-243. 4 cysteine pairs are disulfide-bonded: Cys-282–Cys-286, Cys-283–Cys-323, Cys-293–Cys-317, and Cys-297–Cys-313.

The protein belongs to the chondromodulin-1 family. After cleavage, the post-translationally modified ChM-I is secreted as a glycoprotein. In terms of tissue distribution, detected in cartilage, cardiac valves and valvular interstitial cells (at protein level). Expressed in eye.

It localises to the secreted. Its subcellular location is the extracellular space. The protein resides in the extracellular matrix. It is found in the endomembrane system. Functionally, bifunctional growth regulator that stimulates the growth of cultured chondrocytes in the presence of basic fibroblast growth factor (FGF) but inhibits the growth of cultured vascular endothelial cells. May contribute to the rapid growth of cartilage and vascular invasion prior to the replacement of cartilage by bone during endochondral bone development. Inhibits in vitro tube formation and mobilization of endothelial cells. Plays a role as antiangiogenic factor in cardiac valves to suppress neovascularization. This Rattus norvegicus (Rat) protein is Leukocyte cell-derived chemotaxin 1.